The chain runs to 175 residues: B9 domain-containing protein 2 (175 aa).

The region spanning 2-118 (AEVHVIGQII…DCPTWRPLGS (117 aa)) is the C2 B9-type domain.

This sequence belongs to the B9D family. In terms of assembly, part of the tectonic-like complex (also named B9 complex). Interacts with TUBG1.

It is found in the cytoplasm. The protein localises to the cytoskeleton. Its subcellular location is the cilium basal body. The protein resides in the cilium axoneme. It localises to the nucleus. Its function is as follows. Component of the tectonic-like complex, a complex localized at the transition zone of primary cilia and acting as a barrier that prevents diffusion of transmembrane proteins between the cilia and plasma membranes. In Rattus norvegicus (Rat), this protein is B9 domain-containing protein 2 (B9d2).